A 307-amino-acid chain; its full sequence is Ribosomal RNA small subunit methyltransferase H (307 aa).

S-adenosyl-L-methionine contacts are provided by residues 33–35 (GGY), Asp51, Phe82, Asp96, and Gln103.

It belongs to the methyltransferase superfamily. RsmH family.

It is found in the cytoplasm. It catalyses the reaction cytidine(1402) in 16S rRNA + S-adenosyl-L-methionine = N(4)-methylcytidine(1402) in 16S rRNA + S-adenosyl-L-homocysteine + H(+). Its function is as follows. Specifically methylates the N4 position of cytidine in position 1402 (C1402) of 16S rRNA. In Rickettsia rickettsii (strain Iowa), this protein is Ribosomal RNA small subunit methyltransferase H.